The chain runs to 147 residues: Cyanate hydratase (147 aa).

Active-site residues include Arg-88, Glu-91, and Ser-114.

This sequence belongs to the cyanase family.

It catalyses the reaction cyanate + hydrogencarbonate + 3 H(+) = NH4(+) + 2 CO2. Its function is as follows. Catalyzes the reaction of cyanate with bicarbonate to produce ammonia and carbon dioxide. The polypeptide is Cyanate hydratase (Dechloromonas aromatica (strain RCB)).